An 82-amino-acid chain; its full sequence is Putative membrane protein insertion efficiency factor (82 aa).

The protein belongs to the UPF0161 family.

Its subcellular location is the cell inner membrane. Functionally, could be involved in insertion of integral membrane proteins into the membrane. The sequence is that of Putative membrane protein insertion efficiency factor from Synechococcus elongatus (strain ATCC 33912 / PCC 7942 / FACHB-805) (Anacystis nidulans R2).